Here is a 526-residue protein sequence, read N- to C-terminus: Acid-sensing ion channel 1 (526 aa).

The Cytoplasmic portion of the chain corresponds to 1–49 (MELKTEEEEVGGVQPVSIQAFASSSTLHGLAHIFSYERLSLKRALWALC). A helical membrane pass occupies residues 50–66 (FLGSLAVLLCVCTERVQ). The Extracellular segment spans residues 67-425 (YYFCYHHVTK…ETIEQKKAYE (359 aa)). 7 cysteine pairs are disulfide-bonded: cysteine 93–cysteine 194, cysteine 172–cysteine 179, cysteine 290–cysteine 365, cysteine 308–cysteine 361, cysteine 312–cysteine 359, cysteine 321–cysteine 343, and cysteine 323–cysteine 335. N-linked (GlcNAc...) asparagine glycosylation is found at asparagine 366 and asparagine 393. The discontinuously helical transmembrane segment at 426 to 456 (IAGLLGDIGGQMGLFIGASILTVLELFDYAY) threads the bilayer. A GAS motif; ion selectivity filter motif is present at residues 442 to 444 (GAS). Over 457 to 526 (EVIKHRLCRR…ARGTFEDFTC (70 aa)) the chain is Cytoplasmic. Residues serine 477 and serine 497 each carry the phosphoserine modification.

This sequence belongs to the amiloride-sensitive sodium channel (TC 1.A.6) family. ASIC1 subfamily. Homotrimer. Heterotrimer; with other ASIC proteins producing channel with different properties. Interacts with PICK1; regulates ASIC1 clustering in membranes. Interacts with STOM; alters heterotrimeric ASIC channels activity. Post-translationally, pH-gating could be regulated by serine proteases. Phosphorylation by PKA regulates interaction with PICK1 and subcellular localization. Phosphorylation by PKC may regulate the channel. As to expression, expressed in dorsal root ganglia and sciatic nerve (at protein level). Widely distributed throughout the brain. Expressed in olfactory bulb, neo and allocortical regions, dentate granule cells, pyramidal cells of CA1-CA3 subfields of the hippocampal formation, habenula, basolateral amygdaloid nuclei, and in the Purkinje and granule cells of the cerebellum. Diffusely detected over most other regions of the basal ganglia, including thalamic nuclei, substantia nigra, striatum and globus pallidus, hypothalamus, midbrain, pons, medulla and choroid plexus. Expressed only in dorsal root ganglion (DRG). In terms of tissue distribution, expressed exclusively in trigeminal ganglion and dorsal root ganglion.

Its subcellular location is the cell membrane. It localises to the postsynaptic cell membrane. The protein localises to the cell projection. It is found in the dendrite. The enzyme catalyses Na(+)(in) = Na(+)(out). It catalyses the reaction Li(+)(in) = Li(+)(out). The catalysed reaction is K(+)(in) = K(+)(out). It carries out the reaction Ca(2+)(in) = Ca(2+)(out). The enzyme catalyses H(+)(in) = H(+)(out). Its activity is regulated as follows. Inhibited by the diuretic drug amiloride. External calcium is required to potentiate proton activation of ASIC1 at physiological concentrations, but at higher, non-physiological concentrations, it inhibits activation. Also potentiated by other multivalent cations like Mg(2+), Ba(2+). Activated by FMRFamide-related neuropeptides. Inhibited by anti-inflammatory drugs like salicylic acid. The spider venom psalmotoxin-1 specifically inhibits the ASIC1 homotrimer. The snake venom mambalgin-1, mambalgin-2 and mambalgin-3 inhibit the homotrimer of Asic1a (ASIC1 isoform 1). The snake venom mambalgin-1 and mambalgin-2 inhibit heterotrimers of Asic1a-Asic1b (ASIC1 isoform 1-ASIC1 isoform 3). Heterotrimer of Asic1a-Asic2a is inhibited by the snake venom mambalgin-1, mambalgin-2 and mambalgin-3. Heterotrimer of Asic1a-Asic2b is inhibited by the snake venom mambalgin-1 and mambalgin-2. The spider venom Pi-theraphotoxin-Hm3a inhibits the homotrimer of Asic1a (ASIC1 isoform 1). The spider venom Pi-theraphotoxin-Hm3a inhibits heterotrimers of Asic1a-Asic1b (ASIC1 isoform 1-ASIC1 isoform 3). The spider venom Pi-hexatoxin-Hi1a inhibits the ASIC1 homotrimer. Not inhibited by extracellular calcium. Forms voltage-independent, pH-gated trimeric sodium channels that act as postsynaptic excitatory receptors in the nervous system, playing a crucial role in regulating synaptic plasticity, learning, and memory. Upon extracellular pH drop this channel elicits transient, fast activating, and completely desensitizing inward currents. Displays high selectivity for sodium ions but can also permit the permeation of other cations. Regulates more or less directly intracellular calcium concentration and CaMKII phosphorylation, and thereby the density of dendritic spines. Modulates neuronal activity in the circuits underlying innate fear. In terms of biological role, permeable to other cations including calcium, lithium and potassium. Functionally, pH activation and steady-state inactivation are shifted to more acidic values. Forms channels that are not permeable to calcium as it discrimates stronger between monovalent cations. Its function is as follows. Has no pH-gated sodium channel activity per se but can associate with other ASICs and regulate their pH-sensitivity. This is Acid-sensing ion channel 1 from Rattus norvegicus (Rat).